We begin with the raw amino-acid sequence, 356 residues long: 3-isopropylmalate dehydrogenase (356 aa).

Residues Arg95, Arg105, Arg133, and Asp223 each coordinate substrate. Mg(2+)-binding residues include Asp223, Asp247, and Asp251. Gly281–Asn293 lines the NAD(+) pocket.

It belongs to the isocitrate and isopropylmalate dehydrogenases family. LeuB type 1 subfamily. Homodimer. Requires Mg(2+) as cofactor. Mn(2+) serves as cofactor.

It is found in the cytoplasm. It carries out the reaction (2R,3S)-3-isopropylmalate + NAD(+) = 4-methyl-2-oxopentanoate + CO2 + NADH. It participates in amino-acid biosynthesis; L-leucine biosynthesis; L-leucine from 3-methyl-2-oxobutanoate: step 3/4. Its function is as follows. Catalyzes the oxidation of 3-carboxy-2-hydroxy-4-methylpentanoate (3-isopropylmalate) to 3-carboxy-4-methyl-2-oxopentanoate. The product decarboxylates to 4-methyl-2 oxopentanoate. The chain is 3-isopropylmalate dehydrogenase from Neisseria gonorrhoeae (strain ATCC 700825 / FA 1090).